Reading from the N-terminus, the 1371-residue chain is DNA-directed RNA polymerase subunit beta (1371 aa).

The protein belongs to the RNA polymerase beta chain family. In terms of assembly, the RNAP catalytic core consists of 2 alpha, 1 beta, 1 beta' and 1 omega subunit. When a sigma factor is associated with the core the holoenzyme is formed, which can initiate transcription.

The enzyme catalyses RNA(n) + a ribonucleoside 5'-triphosphate = RNA(n+1) + diphosphate. Its function is as follows. DNA-dependent RNA polymerase catalyzes the transcription of DNA into RNA using the four ribonucleoside triphosphates as substrates. This chain is DNA-directed RNA polymerase subunit beta, found in Geobacter sp. (strain M21).